The chain runs to 210 residues: Syntaxin-binding protein 6 (210 aa).

At Ser-2 the chain carries N-acetylserine. The 60-residue stretch at Gly-151–Cys-210 folds into the v-SNARE coiled-coil homology domain.

In terms of assembly, part of a ternary complex containing SNAP25 and STX1A that can be dissociated by NAPA and NSF. Interacts with STX4A.

It is found in the cytoplasm. The protein localises to the membrane. Functionally, forms non-fusogenic complexes with SNAP25 and STX1A and may thereby modulate the formation of functional SNARE complexes and exocytosis. In Bos taurus (Bovine), this protein is Syntaxin-binding protein 6 (STXBP6).